The chain runs to 297 residues: MNLGALVSETRNPATMGLDEMSTLEMVSCFNQEDRKVPEAIEKVLPAIAQAVDLAAAALKAGGRLIYLGAGTSGRLGVLDASECPPTFGVPHGMVIGLIAGGPGALLKAVEGAEDDAALGEADLVALDLTATDMVVGLAASGRTPYVIGALRYARQLGCPTAAISCNPDSPIAHEVQVAISPVVGPEALTGSTRLKSGTAQKLVLNMLSTGAMVKLGKVYENLMVDVKATNVKLVDRACRIVVEATGAERSQAEAALTQTGFEVKPAILMILAGIDAQEAQQRLQQHDGYLRAALTR.

In terms of domain architecture, SIS spans 55–218 (AAAALKAGGR…STGAMVKLGK (164 aa)). The active-site Proton donor is E83. E114 is an active-site residue.

This sequence belongs to the GCKR-like family. MurNAc-6-P etherase subfamily. In terms of assembly, homodimer.

It carries out the reaction N-acetyl-D-muramate 6-phosphate + H2O = N-acetyl-D-glucosamine 6-phosphate + (R)-lactate. It participates in amino-sugar metabolism; 1,6-anhydro-N-acetylmuramate degradation. The protein operates within amino-sugar metabolism; N-acetylmuramate degradation. Its pathway is cell wall biogenesis; peptidoglycan recycling. Its function is as follows. Specifically catalyzes the cleavage of the D-lactyl ether substituent of MurNAc 6-phosphate, producing GlcNAc 6-phosphate and D-lactate. Together with AnmK, is also required for the utilization of anhydro-N-acetylmuramic acid (anhMurNAc) either imported from the medium or derived from its own cell wall murein, and thus plays a role in cell wall recycling. In Serratia proteamaculans (strain 568), this protein is N-acetylmuramic acid 6-phosphate etherase.